An 82-amino-acid chain; its full sequence is Protein costars (82 aa).

The protein belongs to the costars family.

Its function is as follows. Modulates actin dynamics and cell motility. The protein is Protein costars (cosA) of Dictyostelium discoideum (Social amoeba).